The primary structure comprises 908 residues: Alanine--tRNA ligase (908 aa).

4 residues coordinate Zn(2+): histidine 596, histidine 600, cysteine 698, and histidine 702.

It belongs to the class-II aminoacyl-tRNA synthetase family. Requires Zn(2+) as cofactor.

It localises to the cytoplasm. The catalysed reaction is tRNA(Ala) + L-alanine + ATP = L-alanyl-tRNA(Ala) + AMP + diphosphate. Its function is as follows. Catalyzes the attachment of alanine to tRNA(Ala) in a two-step reaction: alanine is first activated by ATP to form Ala-AMP and then transferred to the acceptor end of tRNA(Ala). Also edits incorrectly charged Ser-tRNA(Ala) and Gly-tRNA(Ala) via its editing domain. The sequence is that of Alanine--tRNA ligase from Lysinibacillus sphaericus (strain C3-41).